The sequence spans 54 residues: MIVKLMGSNKDLHRQAKNNNNKLTPNRSLKETRSRLYIIRRCLVMLLCWREPRD.

Positions 20 to 51 are required for DVL/RTFL small polypeptide activity; sequence NNKLTPNRSLKETRSRLYIIRRCLVMLLCWRE. N26 carries N-linked (GlcNAc...) asparagine glycosylation. The chain crosses the membrane as a helical span at residues 31 to 48; the sequence is ETRSRLYIIRRCLVMLLC.

It belongs to the DVL/RTFL small polypeptides family.

Its subcellular location is the cell membrane. Small polypeptide acting as a regulatory molecule which coordinates cellular responses required for differentiation, growth and development, probably by restricting polar cell proliferation in lateral organs and coordinating socket cell recruitment and differentiation at trichome sites. The protein is Small polypeptide DEVIL 12 of Arabidopsis thaliana (Mouse-ear cress).